Here is a 1040-residue protein sequence, read N- to C-terminus: Vitamin B12-dependent ribonucleotide reductase (1040 aa).

Substrate is bound by residues S169, 213-214, G242, 420-424, and 604-608; these read AC, NPCSE, and PTGTI. A disulfide bridge connects residues C214 and C433. The active-site Proton acceptor is the N420. C422 (cysteine radical intermediate) is an active-site residue. E424 (proton acceptor) is an active-site residue. Disordered stretches follow at residues 909–932 and 969–988; these read SAEGAAKTGGNGPDLTTAPAGATA and GSATNGHSNGQSAGGSSDGA. Over residues 969–979 the composition is skewed to polar residues; the sequence is GSATNGHSNGQ.

The protein belongs to the ribonucleoside diphosphate reductase class-2 family. Adenosylcob(III)alamin is required as a cofactor.

The catalysed reaction is a 2'-deoxyribonucleoside 5'-diphosphate + [thioredoxin]-disulfide + H2O = a ribonucleoside 5'-diphosphate + [thioredoxin]-dithiol. In terms of biological role, catalyzes the reduction of ribonucleotides to deoxyribonucleotides. May function to provide a pool of deoxyribonucleotide precursors for DNA repair during oxygen limitation and/or for immediate growth after restoration of oxygen. This chain is Vitamin B12-dependent ribonucleotide reductase (nrdJ), found in Rhodopirellula baltica (strain DSM 10527 / NCIMB 13988 / SH1).